Consider the following 462-residue polypeptide: tRNA modification GTPase MnmE (462 aa).

Residues Arg26, Glu91, and Arg130 each coordinate (6S)-5-formyl-5,6,7,8-tetrahydrofolate. Residues 228-382 (GLSTAKIGRP…IEERINDIFF (155 aa)) enclose the TrmE-type G domain. Residue Asn238 participates in K(+) binding. GTP is bound by residues 238-243 (NVGKSQ), 257-263 (TDIEGTT), and 282-285 (DTAG). Ser242 provides a ligand contact to Mg(2+). K(+) contacts are provided by Thr257, Ile259, and Thr262. Thr263 lines the Mg(2+) pocket. (6S)-5-formyl-5,6,7,8-tetrahydrofolate is bound at residue Lys462.

It belongs to the TRAFAC class TrmE-Era-EngA-EngB-Septin-like GTPase superfamily. TrmE GTPase family. As to quaternary structure, homodimer. Heterotetramer of two MnmE and two MnmG subunits. Requires K(+) as cofactor.

It localises to the cytoplasm. Exhibits a very high intrinsic GTPase hydrolysis rate. Involved in the addition of a carboxymethylaminomethyl (cmnm) group at the wobble position (U34) of certain tRNAs, forming tRNA-cmnm(5)s(2)U34. The chain is tRNA modification GTPase MnmE from Streptococcus agalactiae.